The chain runs to 235 residues: Alpha-S2-casein (235 aa).

An N-terminal signal peptide occupies residues 1 to 15 (MKFFIFTCLLAVAFA). S23, S24, S25, S28, S47, S72, S73, S74, S77, S147, S149, and S168 each carry phosphoserine. Positions 144–158 (EELSTSEEPVSSSQE) are enriched in polar residues. Positions 144–163 (EELSTSEEPVSSSQEENTKT) are disordered.

Belongs to the alpha-casein family. As to expression, mammary gland specific. Secreted in milk.

It is found in the secreted. Its function is as follows. Important role in the capacity of milk to transport calcium phosphate. The polypeptide is Alpha-S2-casein (CSN1S2) (Sus scrofa (Pig)).